The primary structure comprises 213 residues: Hemolysin-3 homolog (213 aa).

Transmembrane regions (helical) follow at residues 11 to 31 (AITHGIGVLLSIPALVFLIIF), 41 to 61 (IVSFTIFGVSMLLLYLSSTLL), 75 to 95 (IIDHSAIYVLIAGTYTPFLLG), 103 to 123 (FTLLVIVWSLALGGIVFKIFF), 127 to 147 (FILLSTFVYLVMGWLMIIAVK), 157 to 177 (GFSLLFLGGILYSVGTIFYIW), and 185 to 205 (AIWHSFVLGGSAAMFFCVLFY).

The protein belongs to the UPF0073 (Hly-III) family.

Its subcellular location is the cell membrane. The protein is Hemolysin-3 homolog (yplQ) of Bacillus subtilis (strain 168).